Reading from the N-terminus, the 1482-residue chain is Cystic fibrosis transmembrane conductance regulator (1482 aa).

Topologically, residues 1-77 (MQRSPLEKAN…KLINALRRCF (77 aa)) are cytoplasmic. The helical transmembrane segment at 78–98 (FWRFVFHGIILYLGEVTKAVQ) threads the bilayer. The ABC transmembrane type-1 1 domain maps to 81 to 365 (FVFHGIILYL…WAVQTWYDSL (285 aa)). Residues 99 to 122 (PLLLGRIIASYDPDNKVERSIAIY) are Extracellular-facing. Residues 123–146 (LGIGLCLLFIVRTLLLHPAIFGLH) traverse the membrane as a helical segment. At 147-195 (HMGMQMRIALFSLIYKKTLKLSSRVLDKISTGQLISLLSNNLNKFDEGL) the chain is on the cytoplasmic side. A helical membrane pass occupies residues 196 to 216 (ALAHFVWIVPLQVVLLMGLLW). The Extracellular portion of the chain corresponds to 217–222 (DLLQAS). The helical transmembrane segment at 223–243 (AFCGLAFLIVLALFQAWLGQM) threads the bilayer. At 244–298 (MMKYRERRAGKINERLVITSEMIDNIQSVKAYCWEEAMEKMIENLRETELKLTRK) the chain is on the cytoplasmic side. The helical transmembrane segment at 299-319 (TAYVRYFNSSAFFFSGFFVVF) threads the bilayer. Topologically, residues 320-339 (LAVLPYALIKGIILRKIFTT) are extracellular. A helical membrane pass occupies residues 340 to 358 (ISFCIVLRMAVTRQFPWAV). Residues 359-859 (QTWYDSLGAI…YLRYITIHKN (501 aa)) lie on the Cytoplasmic side of the membrane. ATP contacts are provided by residues tryptophan 401, serine 434, 458-465 (GSTGAGKT), and glutamine 493. The ABC transporter 1 domain occupies 423-646 (NGDNGLFFSN…RPDFSSKLMG (224 aa)). Cysteine 524 is lipidated: S-palmitoyl cysteine. Serine 549 and serine 660 each carry phosphoserine. The tract at residues 654–832 (SAERRSSILT…DEINEEDLKE (179 aa)) is disordered R region. Serine 670 is subject to Phosphoserine; by PKA. A Phosphoserine modification is found at serine 686. A Glycyl lysine isopeptide (Lys-Gly) (interchain with G-Cter in ubiquitin) cross-link involves residue lysine 688. 6 positions are modified to phosphoserine: serine 700, serine 712, serine 737, serine 769, serine 796, and serine 814. A helical membrane pass occupies residues 860–880 (LVFVLIWCLVIFLVEVAASLV). The ABC transmembrane type-1 2 domain occupies 860-1156 (LVFVLIWCLV…AVNSSIDVDS (297 aa)). The Extracellular portion of the chain corresponds to 881–919 (GLWLLEDISFKDKTNGTNGANNTFPVIITDTSKYYLFYI). Asparagine 895 and asparagine 901 each carry an N-linked (GlcNAc...) asparagine glycan. A discontinuously helical membrane pass occupies residues 920–940 (YVGIADTFFALGIFRGLPLVH). Over 941 to 991 (TLISVSKILHHKMLYSVLKAPMSTFNTLKPGGILNRFSKDIAILDDLLPLT) the chain is Cytoplasmic. The chain crosses the membrane as a helical span at residues 992-1012 (IFDFIQLILIVVGALIVVSAI). The Extracellular portion of the chain corresponds to 1013-1014 (RP). Residues 1015–1035 (YIFLATVPVIIAFIMLRAYFL) form a helical membrane-spanning segment. The Cytoplasmic portion of the chain corresponds to 1036-1096 (QTSQQLKQLE…TASWFLYLST (61 aa)). The helical transmembrane segment at 1097 to 1117 (LRWFQMRIELVFVIFFIAVTF) threads the bilayer. Residues 1118–1131 (ISILTTGDGEGRVG) are Extracellular-facing. The chain crosses the membrane as a helical span at residues 1132 to 1152 (ILLTLAMNIMSTLQWAVNSSI). Residues 1153–1482 (DVDSLMRSVS…TEEEVQETRL (330 aa)) are Cytoplasmic-facing. Residues 1212–1445 (MIVKDLTAKY…KSLYRQAISH (234 aa)) form the ABC transporter 2 domain. ATP contacts are provided by residues tyrosine 1221 and 1246–1253 (GRTGSGKS). Positions 1388 to 1482 (RVLKNAFANC…TEEEVQETRL (95 aa)) are interaction with GORASP2. The S-palmitoyl cysteine moiety is linked to residue cysteine 1397. A phosphoserine mark is found at serine 1446 and serine 1458. Residues 1480–1482 (TRL) carry the PDZ-binding motif.

This sequence belongs to the ABC transporter superfamily. ABCC family. CFTR transporter (TC 3.A.1.202) subfamily. As to quaternary structure, monomer; does not require oligomerization for channel activity. May form oligomers in the membrane. Interacts with SLC26A3, SLC26A6 and NHERF1. Interacts with SHANK2. Interacts with MYO6. Interacts (via C-terminus) with GOPC (via PDZ domain); this promotes CFTR internalization and thereby decreases channel activity. Interacts with SLC4A7 through NHERF1. Found in a complex with MYO5B and RAB11A. Interacts with ANO1. Interacts with SLC26A8. Interacts with AHCYL1; the interaction increases CFTR activity. Interacts with CSE1L. The core-glycosylated form interacts with GORASP2 (via PDZ GRASP-type 1 domain) in respone to ER stress. Interacts with MARCHF2; the interaction leads to CFTR ubiqtuitination and degradation. Interacts with ADGRG2. In terms of processing, N-glycosylated. Post-translationally, phosphorylated; cAMP treatment promotes phosphorylation and activates the channel. Dephosphorylation decreases the ATPase activity (in vitro). Phosphorylation at PKA sites activates the channel. Phosphorylation at PKC sites enhances the response to phosphorylation by PKA. Phosphorylated by AMPK; this inhibits channel activity. Ubiquitinated, leading to its degradation in the lysosome. Deubiquitination by USP10 in early endosomes enhances its endocytic recycling to the cell membrane. Ubiquitinated by RNF185 during ER stress. Ubiquitinated by MARCHF2.

It localises to the apical cell membrane. It is found in the early endosome membrane. Its subcellular location is the cell membrane. The protein localises to the recycling endosome membrane. The protein resides in the endoplasmic reticulum membrane. It localises to the nucleus. The catalysed reaction is ATP + H2O + closed Cl(-) channel = ADP + phosphate + open Cl(-) channel.. It carries out the reaction chloride(in) = chloride(out). It catalyses the reaction hydrogencarbonate(in) = hydrogencarbonate(out). The enzyme catalyses ATP + H2O = ADP + phosphate + H(+). Its function is as follows. Epithelial ion channel that plays an important role in the regulation of epithelial ion and water transport and fluid homeostasis. Mediates the transport of chloride ions across the cell membrane. Possesses an intrinsic ATPase activity and utilizes ATP to gate its channel; the passive flow of anions through the channel is gated by cycles of ATP binding and hydrolysis by the ATP-binding domains. The ion channel is also permeable to HCO(3)(-); selectivity depends on the extracellular chloride concentration. Exerts its function also by modulating the activity of other ion channels and transporters. Contributes to the regulation of the pH and the ion content of the epithelial fluid layer. Modulates the activity of the epithelial sodium channel (ENaC) complex, in part by regulating the cell surface expression of the ENaC complex. May regulate bicarbonate secretion and salvage in epithelial cells by regulating the transporter SLC4A7. Can inhibit the chloride channel activity of ANO1. Plays a role in the chloride and bicarbonate homeostasis during sperm epididymal maturation and capacitation. In Didelphis virginiana (North American opossum), this protein is Cystic fibrosis transmembrane conductance regulator.